The following is a 226-amino-acid chain: V-type proton ATPase subunit E (226 aa).

The protein belongs to the V-ATPase E subunit family. V-ATPase is a heteromultimeric enzyme made up of two complexes: the ATP-hydrolytic V1 complex and the proton translocation V0 complex. The V1 complex consists of three catalytic AB heterodimers that form a heterohexamer, three peripheral stalks each consisting of EG heterodimers, one central rotor including subunits D and F, and the regulatory subunits C and H. The proton translocation complex V0 consists of the proton transport subunit a, a ring of proteolipid subunits c9c'', rotary subunit d, subunits e and f, and the accessory subunits VhaAC45 and ATP6AP2.

Functionally, subunit of the V1 complex of vacuolar(H+)-ATPase (V-ATPase), a multisubunit enzyme composed of a peripheral complex (V1) that hydrolyzes ATP and a membrane integral complex (V0) that translocates protons. V-ATPase is responsible for acidifying and maintaining the pH of intracellular compartments and in some cell types, is targeted to the plasma membrane, where it is responsible for acidifying the extracellular environment. The protein is V-type proton ATPase subunit E (Vha26) of Drosophila melanogaster (Fruit fly).